The primary structure comprises 2481 residues: Tetratricopeptide repeat protein 28 (2481 aa).

M1 carries the post-translational modification N-acetylmethionine. Positions 1 to 14 (MEQSPPPAPEPTQG) are enriched in pro residues. Residues 1–48 (MEQSPPPAPEPTQGPTPARSRRRREPESPPASAPIPLFGADTIGQRSP) form a disordered region. S28 is modified (phosphoserine). TPR repeat units follow at residues 58–91 (FVEKVRQSNQACHDGDFHTAIVLYNEALAVDPQN), 93–125 (ILYSNRSAAYMKIQQYDKALDDAIKARLLNPKW), 126–159 (PKAYFRQGVALQYLGRHADALAAFASGLAQDPKS), 196–229 (FVVVSVVGQELLTAGHHGASVVVLEAALKIGTCS), 234–267 (GSVFSALSSAYWSLGNTEKSTGYMQQDLDVAKTL), 274–307 (CRAHGNLGSAFFSKGNYREALTNHRHQLVLAMKL), 314–347 (SSALSSLGHVYTAIGDYPNALASHKQCVLLAKQS), 354–387 (ARELGNMGAVYIAMGDFENAVQCHEQHLKIAKDL), 394–427 (ARAYSNLGSAYHYRRNFDKAMSYHNYVLELAQEL), 434–467 (MRAYAGLGHAARCMQDLERAKQYHEQQLGIAEDL), 474–507 (GRASSNLGIIHQMKGDYDTALKLHKTHLCIAQEL), 514–547 (GRAYGNMGNAYNALGMYDQAVKYHRQELQISMEV), 554–587 (ASTHGNLAVAYQALGAHDRALQHYQNHLNIAREL), 594–627 (ARALSNLGNFHCSRGEYVQAAPYYEQYLRLAPDL), 634–667 (GKVCHNLGYAHYCLGNYQEAVKYYEQDLALAKDL), 674–707 (AKAYCNLGLAFKALLNFSKAEECQKYLLSLAQSL), 714–747 (FRALGNLGDIFICKKDINGAIKFYEQQLGLAHQV), 754–787 (ASAYAALGTAYRMIQKYDKALGYHTQELEVYQEL), 794–827 (CRAHGHLAAVYMALGKYTMAFKCYEEQLDLGQKL), 834–867 (AQVYGNMGITKMNMNVMEEAIGYFEQQLAMLQQL), 877–910 (GRAYGNLGDCYEALGDYEEAIKYYEQYLSVAQSL), 917–950 (AKAYRGLGNGHRAMGSLQQALVCFEKRLVVAHEL), 957–990 (AQAYGELGSLHSQLGNYEQAISCLERQLNIARDM), 997–1030 (SDAACGLGGVYQQMGEYDTALQYHQLDLQIAEET), 1037–1070 (GRAYGNLGLTYESLGTFERAVVYQEQHLSIAAQM), 1077–1110 (TVSYSSLGRTHHALQNYSQAVMYLQEGLRLAEQL), 1117–1150 (AKIRHGLGLSLWASGNLEEAQHQLYRASALFETI), and 1169–1202 (TSSYQALQRVLVSLGHHDEALAVAERGRTRAFAD). At S1590 the chain carries Phosphoserine. 3 disordered regions span residues 2004 to 2055 (FVSK…DEEE), 2075 to 2161 (NTCF…DPQE), and 2176 to 2339 (AVER…PADA). Composition is skewed to polar residues over residues 2029–2043 (AYLQRSTLPRSQLPP) and 2096–2122 (SVSSKGSISTPNSPVKMTLIPSPNSPF). S2104 is subject to Phosphoserine. The segment covering 2130–2146 (SSDTGESDQSSTETDST) has biased composition (low complexity). The span at 2149–2159 (SQEESNPKLDP) shows a compositional bias: basic and acidic residues. Polar residues predominate over residues 2183–2214 (SGGQVSKSNNPEDGVQAPSSTAVFRASETSAF). Phosphoserine is present on residues S2224 and S2251. Positions 2238–2282 (RSSSLPKVSSGYSSPTTSEMSIKDSPSQHSGRPSPGCDSQTSQLD) are enriched in polar residues. The segment covering 2307 to 2339 (SPSSGHQSPAGSAPSPALSYSSAGSARSSPADA) has biased composition (low complexity). Phosphoserine is present on residues S2393 and S2398. Residues 2420–2467 (QHDGAPPKAPPNGHWRTETTSLGSLPLPAGPPATAPARPLRLPSGNGY) form a disordered region.

In terms of assembly, interacts with AURKB. In terms of tissue distribution, widely expressed in fetal tissues. In adult tissues, expressed in testis and ovary and, at much lower levels, in kidney and pancreas.

It localises to the cytoplasm. It is found in the cytoskeleton. Its subcellular location is the microtubule organizing center. The protein localises to the centrosome. The protein resides in the spindle. It localises to the spindle pole. It is found in the midbody. In terms of biological role, during mitosis, may be involved in the condensation of spindle midzone microtubules, leading to the formation of midbody. The protein is Tetratricopeptide repeat protein 28 (TTC28) of Homo sapiens (Human).